A 374-amino-acid polypeptide reads, in one-letter code: Serine/threonine-protein kinase-transforming protein mos (374 aa).

The Protein kinase domain occupies 94-370; it reads VCLMHRLGSG…LLQRDLKAFR (277 aa). ATP contacts are provided by residues 100 to 108 and Lys121; that span reads LGSGGFGSV. Residue Asp229 is the Proton acceptor of the active site.

The protein belongs to the protein kinase superfamily. Ser/Thr protein kinase family.

The enzyme catalyses L-seryl-[protein] + ATP = O-phospho-L-seryl-[protein] + ADP + H(+). The catalysed reaction is L-threonyl-[protein] + ATP = O-phospho-L-threonyl-[protein] + ADP + H(+). This Mus musculus (Mouse) protein is Serine/threonine-protein kinase-transforming protein mos (V-MOS).